A 324-amino-acid polypeptide reads, in one-letter code: Fibronectin type III domain-containing protein 8 (324 aa).

The 102-residue stretch at 179–280 (PDTPFIFEHT…KPYKFATLAT (102 aa)) folds into the Fibronectin type-III domain.

This is Fibronectin type III domain-containing protein 8 (FNDC8) from Macaca fascicularis (Crab-eating macaque).